The sequence spans 327 residues: GTPase Obg (327 aa).

Positions 2-160 (HLFKDSLNLI…LNLRLELSLI (159 aa)) constitute an Obg domain. Residues 161-326 (ADIGLVGLPN…LVSEFFSLVK (166 aa)) form the OBG-type G domain. GTP contacts are provided by residues 167–174 (GLPNAGKS), 192–196 (FTTKI), 213–216 (DLPG), 280–283 (SKLD), and 307–309 (SIY). Mg(2+) is bound by residues S174 and T194.

Belongs to the TRAFAC class OBG-HflX-like GTPase superfamily. OBG GTPase family. As to quaternary structure, monomer. Mg(2+) is required as a cofactor.

It is found in the cytoplasm. In terms of biological role, an essential GTPase which binds GTP, GDP and possibly (p)ppGpp with moderate affinity, with high nucleotide exchange rates and a fairly low GTP hydrolysis rate. Plays a role in control of the cell cycle, stress response, ribosome biogenesis and in those bacteria that undergo differentiation, in morphogenesis control. This Borrelia duttonii (strain Ly) protein is GTPase Obg.